The primary structure comprises 519 residues: Histidine--tRNA ligase (519 aa).

This sequence belongs to the class-II aminoacyl-tRNA synthetase family. Homodimer.

It is found in the cytoplasm. The enzyme catalyses tRNA(His) + L-histidine + ATP = L-histidyl-tRNA(His) + AMP + diphosphate + H(+). The sequence is that of Histidine--tRNA ligase from Roseobacter denitrificans (strain ATCC 33942 / OCh 114) (Erythrobacter sp. (strain OCh 114)).